We begin with the raw amino-acid sequence, 105 residues long: MADTKVDTSKEVSAKDLKEKKQVEEAENGKDAPANGNAENEENGDQENEVDEEDDDVAEEDEEDDGEGDDDDEDEEAEGGTGKRAAEDDDDDEDDVDPKKQKTDV.

Residues 1–30 are compositionally biased toward basic and acidic residues; the sequence is MADTKVDTSKEVSAKDLKEKKQVEEAENGK. A disordered region spans residues 1–105; that stretch reads MADTKVDTSK…VDPKKQKTDV (105 aa). Acidic residues-rich tracts occupy residues 39–78 and 87–96; these read ENEENGDQENEVDEEDDDVAEEDEEDDGEGDDDDEDEEAE and EDDDDDEDDV.

The protein belongs to the pro/parathymosin family. In terms of tissue distribution, at the 20-somite stage (18 hpf), expressed on the dorsal side of the embryo in the developing central and peripheral nervous system (CNS and PNS), in the tail bud and the pronephric ducts. In the PNS, expressed in the otic vesicle, trigeminal ganglion and the anterior lateral line placode. Localized throughout the hindbrain, with highest expression in rhombomeres 3 and 4. In the head, expressed in the olfactory placode and in the diencephalic region. At the end of the segmentation period (20 hpf), expression begins in the newly forming endodermal pouches, and weakly in the pharyngeal arch precursor cells. During the early pharyngula period, expressed in the pectoral fin bud, the developing retina, and still present in the central nervous system and endodermal pouches. In the tail, expressed in the spinal cord and posterior lateral line precursors. Weakly expressed in the pronephric ducts, only in the corpuscles of Stanius. At 48 hpf, still expressed in the retina and brain, where expression is almost uniform. At this stage, expression is decreased in the spinal cord and is absent from the lateral line cells and pronephric ducts, but appears in the intestine and continues in the pharyngeal arches. In 72 hpf embryos, expression in the brain remains uniform but is restricted to amacrine cells in the retina. In the pharyngeal arches, expression continues to be limited to the ectodermal and endodermal covering cells.

It localises to the nucleus. The sequence is that of Prothymosin alpha-A (ptmaa) from Danio rerio (Zebrafish).